The chain runs to 496 residues: MKFSLAVSFFILMSLLFEDACSKEKSSKKGKGKKKQYLCPSQQSAEDLARVPPNSTSNILNRLLVSYDPRIRPNFKGIPVDVVVNIFINSFGSIQETTMDYRVNIFLRQKWNDPRLKLPSDFRGSDALTVDPTMYKCLWKPDLFFANEKSANFHDVTQENILLFIFRDGDVLVSMRLSITLSCPLDLTLFPMDTQRCKMQLESFGYTTDDLRFIWQSGDPVQLEKIALPQFDIKKEDIEYGNCTKYYKGTGYYTCVEVIFTLRRQVGFYMMGVYAPTLLIVVLSWLSFWINPDASAARVPLGIFSVLSLASECTTLAAELPKVSYVKALDVWLIACLLFGFASLVEYAVVQVMLNNPKRVEAEKARIAKAEQADGKGGNAAKKNTVNGTGTPVHISTLQVGETRCKKVCTSKSDLRSNDFSIVGSLPRDFELSNYDCYGKPIEVNNGLGKPQAKNKKPPPAKPVIPTAAKRIDLYARALFPFCFLFFNVIYWSIYL.

A signal peptide spans 1–22 (MKFSLAVSFFILMSLLFEDACS). Residues 23–268 (KEKSSKKGKG…IFTLRRQVGF (246 aa)) lie on the Extracellular side of the membrane. Residue Asn54 is glycosylated (N-linked (GlcNAc...) asparagine). Residues Arg108 and Ser174 each contribute to the glycine site. An intrachain disulfide couples Cys183 to Cys197. Asn242 carries N-linked (GlcNAc...) asparagine glycosylation. Cys243 and Cys255 form a disulfide bridge. Thr250 contributes to the glycine binding site. The helical transmembrane segment at 269 to 289 (YMMGVYAPTLLIVVLSWLSFW) threads the bilayer. Over 290 to 294 (INPDA) the chain is Cytoplasmic. Residues 295 to 315 (SAARVPLGIFSVLSLASECTT) form a helical membrane-spanning segment. Residues 316 to 327 (LAAELPKVSYVK) are Extracellular-facing. Residues 328–349 (ALDVWLIACLLFGFASLVEYAV) form a helical membrane-spanning segment. Residues 350–471 (VQVMLNNPKR…KPVIPTAAKR (122 aa)) are Cytoplasmic-facing. Thr391 bears the Phosphothreonine mark. Residues 472–495 (IDLYARALFPFCFLFFNVIYWSIY) form a helical membrane-spanning segment. Leu496 is a topological domain (extracellular).

It belongs to the ligand-gated ion channel (TC 1.A.9) family. Glycine receptor (TC 1.A.9.3) subfamily. GLRB sub-subfamily. In terms of assembly, forms heteropentamers with glycin receptor alpha subunits. Heteropentamers with GLRA1 can be composed of two GLRA1 and three GLRB subunits, or three GLRA1 and two GLRB subunits, or four GLRA1 subunits and one GLRB subunit. Forms heteropentamers with GLRA2. Functional GLRB-GLRA2 heteropentamers contain four GLRA2 subunits and one GLRB subunit, although alternative subunit composition cannot be excluded. Forms a heteropentamer with GLRA3. Interacts with GPHN. As to expression, detected in spinal cord and brain stem (at protein level). Detected in spinal cord, cerebellum and brain cortex.

The protein resides in the postsynaptic cell membrane. It localises to the cell membrane. The protein localises to the synapse. Its subcellular location is the perikaryon. It is found in the cell projection. The protein resides in the dendrite. It localises to the cytoplasm. It carries out the reaction chloride(in) = chloride(out). With respect to regulation, channel opening is triggered by extracellular glycine. Heteropentameric channels composed of GLRB and GLRA1 are activated by lower glycine levels than homopentameric GLRA1. In terms of biological role, subunit of heteromeric glycine-gated chloride channels. Plays an important role in the down-regulation of neuronal excitability. Contributes to the generation of inhibitory postsynaptic currents. The protein is Glycine receptor subunit beta (Glrb) of Rattus norvegicus (Rat).